Here is a 124-residue protein sequence, read N- to C-terminus: Ribonuclease pancreatic (124 aa).

The interval 1–24 is disordered; that stretch reads KETAAAKFQRQHMDSSTSSASSSN. 2 residues coordinate substrate: K7 and R10. The Proton acceptor role is filled by H12. 4 disulfides stabilise this stretch: C26–C84, C40–C95, C58–C110, and C65–C72. N34 is a glycosylation site (N-linked (GlcNAc...) asparagine; in river-breed only). Substrate is bound by residues 41 to 45, K66, and R85; that span reads KPVNT. H119 serves as the catalytic Proton donor.

It belongs to the pancreatic ribonuclease family. Monomer. Interacts with and forms tight 1:1 complexes with RNH1. Dimerization of two such complexes may occur. Interaction with RNH1 inhibits this protein. Post-translationally, swamp breed ribonuclease do not bind carbohydrate, but there is evidence of a polymorphic form that does. In terms of tissue distribution, pancreas.

The protein resides in the secreted. The catalysed reaction is an [RNA] containing cytidine + H2O = an [RNA]-3'-cytidine-3'-phosphate + a 5'-hydroxy-ribonucleotide-3'-[RNA].. It catalyses the reaction an [RNA] containing uridine + H2O = an [RNA]-3'-uridine-3'-phosphate + a 5'-hydroxy-ribonucleotide-3'-[RNA].. Functionally, endonuclease that catalyzes the cleavage of RNA on the 3' side of pyrimidine nucleotides. Acts on single-stranded and double-stranded RNA. The chain is Ribonuclease pancreatic (RNASE1) from Bubalus bubalis (Domestic water buffalo).